A 283-amino-acid chain; its full sequence is Protein MGARP (283 aa).

A disordered region spans residues 1-36 (MYLRRAVSKTLALPRRAPPGPAPLGKDASLRRMSSR). Topologically, residues 1 to 41 (MYLRRAVSKTLALPRRAPPGPAPLGKDASLRRMSSRKFPGT) are cytoplasmic. Residues 42-64 (SGSNMIYYLVVGVTVSAGGYYTY) form a helical; Anchor for type IV membrane protein membrane-spanning segment. Topologically, residues 65-283 (KALTSKQVRR…VTEETASPQG (219 aa)) are mitochondrial intermembrane. 2 disordered regions span residues 78–101 (VAEPKEQTKAELQPLPGEKEEHVA) and 118–283 (AESV…SPQG). The span at 128-160 (EAAVVLPEESQASAPSEVPAEAAVVEASLSSSE) shows a compositional bias: low complexity. 2 stretches are compositionally biased toward polar residues: residues 171–184 (VETTESVPESTQEV) and 199–220 (ADTSQEGADTSQEGADTSQEGA). The segment covering 221-245 (DTTKEEADNSKEAEGTTTEDPRSIS) has biased composition (basic and acidic residues).

Interacts with RHOT1/Miro-1, RHOT2/Miro-2, TRAK1/OIP106 and TRAK2/GRIF1. In terms of tissue distribution, expressed in the ovary, testis, brain, adrenal glands and the compartments of the visual nervous system. Expressed in corneal endothelium (CE) (at protein level). Expressed in steroidogenic tissues with the highest level of expression observed in the adrenal gland. Weakly expressed in placenta. Weakly expressed in astrocytes and neurons under normoxia. Strongly expressed in astrocytes and neurons under hypoxia. Expressed in each layer of the retina, with particularly higher staining in the inner segment of the photoreceptor (IS), the outer plexiform layer (OPL) and the ganglion cell layer (GCL).

Its subcellular location is the mitochondrion. The protein resides in the mitochondrion outer membrane. It is found in the mitochondrion inner membrane. In terms of biological role, plays a role in the trafficking of mitochondria along microtubules. Regulates the kinesin-mediated axonal transport of mitochondria to nerve terminals along microtubules during hypoxia. Participates in the translocation of TRAK2/GRIF1 from the cytoplasm to the mitochondrion. Also plays a role in steroidogenesis through maintenance of mitochondrial abundance and morphology. Plays an inhibitory role during neocortex development by regulating mitochondrial morphology, distribution and motility in neocortical neurons. This Mus musculus (Mouse) protein is Protein MGARP (Mgarp).